The chain runs to 95 residues: Small ribosomal subunit protein bS16 (95 aa).

Belongs to the bacterial ribosomal protein bS16 family.

This chain is Small ribosomal subunit protein bS16, found in Streptococcus pneumoniae (strain CGSP14).